The sequence spans 100 residues: Putative antiporter subunit mnhF2 (100 aa).

A run of 3 helical transmembrane segments spans residues 5 to 25 (FTQI…LVCL), 38 to 60 (VVSF…VIFN), and 65 to 87 (LDSI…RFIG).

Belongs to the CPA3 antiporters (TC 2.A.63) subunit F family. In terms of assembly, may form a heterooligomeric complex that consists of seven subunits: mnhA2, mnhB2, mnhC2, mnhD2, mnhE2, mnhF2 and mnhG2.

The protein resides in the cell membrane. The protein is Putative antiporter subunit mnhF2 (mnhF2) of Staphylococcus epidermidis (strain ATCC 35984 / DSM 28319 / BCRC 17069 / CCUG 31568 / BM 3577 / RP62A).